Here is a 238-residue protein sequence, read N- to C-terminus: CD63 antigen (238 aa).

Residues 1–11 lie on the Cytoplasmic side of the membrane; sequence MAVEGGMKCVK. A helical transmembrane segment spans residues 12-32; the sequence is FLLYVLLLAFCACAVGLIAVG. Over 33 to 51 the chain is Extracellular; sequence VGAQLVLSQTITHGATPGS. A helical transmembrane segment spans residues 52-72; sequence LLPVVIIAVGAFLFLVAFVGC. At 73 to 81 the chain is on the cytoplasmic side; it reads CGTCKENYC. A helical transmembrane segment spans residues 82-102; that stretch reads LMITFAIFLSLIMLVEVAAAI. Topologically, residues 103 to 203 are extracellular; that stretch reads AGYVFRDKVM…KIGLWLRKNV (101 aa). N-linked (GlcNAc...) asparagine glycans are attached at residues Asn-125, Asn-130, Asn-150, and Asn-172. A helical membrane pass occupies residues 204–224; it reads LVVAAAALGIAFVEVLGIVFA. Residues 225–238 are Cytoplasmic-facing; sequence CCLVKSIRSGYEVM. The short motif at 234–238 is the Lysosomal targeting motif element; that stretch reads GYEVM.

The protein belongs to the tetraspanin (TM4SF) family. In terms of assembly, interacts with TIMP1 and ITGB1 and recruits TIMP1 to ITGB1. Interacts with CD9. Identified in a complex with CD9 and ITGB3. Interacts with PMEL. Interacts with KDR/VEGFR2; identified in a complex with ITGB1 and KDR/VEGFR2 and is required to recruit KDR to ITGB1 complexes. Interacts with SYT7. In terms of processing, palmitoylated at a low, basal level in unstimulated platelets. The level of palmitoylation increases when platelets are activated by thrombin (in vitro).

It localises to the cell membrane. It is found in the lysosome membrane. The protein localises to the late endosome membrane. Its subcellular location is the endosome. The protein resides in the multivesicular body. It localises to the melanosome. It is found in the secreted. The protein localises to the extracellular exosome. Its subcellular location is the cell surface. Functionally, functions as a cell surface receptor for TIMP1 and plays a role in the activation of cellular signaling cascades. Plays a role in the activation of ITGB1 and integrin signaling, leading to the activation of AKT, FAK/PTK2 and MAP kinases. Promotes cell survival, reorganization of the actin cytoskeleton, cell adhesion, spreading and migration, via its role in the activation of AKT and FAK/PTK2. Plays a role in VEGFA signaling via its role in regulating the internalization of KDR/VEGFR2. Plays a role in intracellular vesicular transport processes, and is required for normal trafficking of the PMEL luminal domain that is essential for the development and maturation of melanocytes. Plays a role in the adhesion of leukocytes onto endothelial cells via its role in the regulation of SELP trafficking. May play a role in mast cell degranulation in response to Ms4a2/FceRI stimulation, but not in mast cell degranulation in response to other stimuli. The protein is CD63 antigen (CD63) of Oryctolagus cuniculus (Rabbit).